Here is a 762-residue protein sequence, read N- to C-terminus: Polymeric immunoglobulin receptor (762 aa).

The signal sequence occupies residues 1 to 18 (MTLFFLTCLLAVFPVVSM). The Ig-like V-type 1; required for binding to polymeric IgA and IgM domain occupies 19–120 (KSPIFGPPEI…GVGINNRGLS (102 aa)). Topologically, residues 19–636 (KSPIFGPPEI…SSAGQGGSSK (618 aa)) are extracellular. Disulfide bonds link C40–C110 and C56–C64. 2 N-linked (GlcNAc...) asparagine glycosylation sites follow: N83 and N135. 4 Ig-like V-type domains span residues 145–238 (GGKV…DLHV), 251–351 (GSSV…ETTF), 363–460 (GGSV…LKIV), and 464–563 (PNLK…VYVA). Intrachain disulfides connect C152-C221, C258-C324, C272-C280, C370-C443, C384-C394, C484-C546, C488-C522, and C498-C505. N291 carries an N-linked (GlcNAc...) asparagine glycan. A glycan (N-linked (GlcNAc...) asparagine) is linked at N423. The N-linked (GlcNAc...) asparagine glycan is linked to N530. The disordered stretch occupies residues 604–634 (FVDTQAKDPEDAAGGSIASADPGSSAGQGGS). A helical membrane pass occupies residues 637–659 (VVVSTLVPLALVLALGVLVVGVL). The Cytoplasmic portion of the chain corresponds to 660-762 (RARHRKNVDR…ANIQDGPSKA (103 aa)).

Interacts (mainly via CDR1-like domain) with dimeric IgA. Interacts (mainly via CDR2-like domain) with pentameric IgM. As to quaternary structure, either free or part of the secretory IgA (sIgA) complex that consists of two, four or five IgA monomers, and two additional non-Ig polypeptides, namely the JCHAIN and the secretory component (the proteolytic product of PIGR). Free secretory component interacts with bacterial antigens toxA of C.difficile and eae of E.coli. In terms of processing, N-glycosylated. Carries predominantly biantennary complex type glycans which are largely non-fucosylated. Sialylation with NeuAc is common, except for Asn-291 which carries exclusively high mannose glycans. N-glycans attached to Asn-83: Gal2GlcNAc2Man3GlcNAc2; Gal2GlcNAc2Man3GlcNAc2(Fuc); Gal1GlcNAc1Man4GlcNAc2(Fuc); Gal1GlcNAc1Man3GlcNAc2; Gal1GlcNAc1Man4GlcNAc2 and NeuAc1Gal2GlcNAc2Man3GlcNAc2. N-glycans attached to Asn-135: Gal2GlcNAc2Man3GlcNAc2; Gal1GlcNAc1Man3GlcNAc2 and NeuAc1Gal2GlcNAc2Man3GlcNAc2. N-glycans attached to Asn-291: Man5-8GlcNAc2. N-glycans attached to Asn-423: NeuAc1Gal2GlcNAc2Man3GlcNAc2. N-glycans attached to Asn-530: Gal2GlcNAc2Man3GlcNAc2; Gal1GlcNAc1Man3GlcNAc2 and NeuAc1Gal2GlcNAc2Man3GlcNAc2. N-glycosylation is required for anchoring IgA molecules to mucus but is not necessary for Ig binding.

The protein localises to the cell membrane. The protein resides in the secreted. Its function is as follows. Mediates selective transcytosis of polymeric IgA and IgM across mucosal epithelial cells. Binds polymeric IgA and IgM at the basolateral surface of epithelial cells. The complex is then transported across the cell to be secreted at the apical surface. During this process, a cleavage occurs that separates the extracellular (known as the secretory component) from the transmembrane segment. In terms of biological role, through its N-linked glycans ensures anchoring of secretory IgA (sIgA) molecules to mucus lining the epithelial surface to neutralize extracellular pathogens. On its own (free form) may act as a non-specific microbial scavenger to prevent pathogen interaction with epithelial cells. This is Polymeric immunoglobulin receptor (PIGR) from Equus asinus (Donkey).